The following is a 187-amino-acid chain: UPF0669 protein C6orf120 homolog (187 aa).

The N-terminal stretch at 1–23 is a signal peptide; that stretch reads MVEYWKRNFFMVLVLQAFYLANC. Asn47 carries an N-linked (GlcNAc...) asparagine glycan.

It belongs to the UPF0669 family.

The protein localises to the secreted. In Xenopus tropicalis (Western clawed frog), this protein is UPF0669 protein C6orf120 homolog.